Reading from the N-terminus, the 545-residue chain is CTP synthase (545 aa).

An amidoligase domain region spans residues 1–265; sequence MSKYIFVTGG…DDLVVQNLGL (265 aa). Ser13 contributes to the CTP binding site. Position 13 (Ser13) interacts with UTP. ATP-binding positions include 14 to 19 and Asp71; that span reads SLGKGA. Asp71 and Glu139 together coordinate Mg(2+). Residues 146–148, 186–191, and Lys222 each bind CTP; these read DIE and KTKPTQ. UTP contacts are provided by residues 186 to 191 and Lys222; that span reads KTKPTQ. Residues 290–541 enclose the Glutamine amidotransferase type-1 domain; sequence VIALVGKYVG…MRAAIAQRER (252 aa). L-glutamine is bound at residue Gly351. The Nucleophile; for glutamine hydrolysis role is filled by Cys378. Residues 379-382, Glu402, and Arg469 each bind L-glutamine; that span reads LGMQ. Catalysis depends on residues His514 and Glu516.

The protein belongs to the CTP synthase family. Homotetramer.

The enzyme catalyses UTP + L-glutamine + ATP + H2O = CTP + L-glutamate + ADP + phosphate + 2 H(+). The catalysed reaction is L-glutamine + H2O = L-glutamate + NH4(+). It catalyses the reaction UTP + NH4(+) + ATP = CTP + ADP + phosphate + 2 H(+). The protein operates within pyrimidine metabolism; CTP biosynthesis via de novo pathway; CTP from UDP: step 2/2. Allosterically activated by GTP, when glutamine is the substrate; GTP has no effect on the reaction when ammonia is the substrate. The allosteric effector GTP functions by stabilizing the protein conformation that binds the tetrahedral intermediate(s) formed during glutamine hydrolysis. Inhibited by the product CTP, via allosteric rather than competitive inhibition. In terms of biological role, catalyzes the ATP-dependent amination of UTP to CTP with either L-glutamine or ammonia as the source of nitrogen. Regulates intracellular CTP levels through interactions with the four ribonucleotide triphosphates. In Acidithiobacillus ferrooxidans (strain ATCC 23270 / DSM 14882 / CIP 104768 / NCIMB 8455) (Ferrobacillus ferrooxidans (strain ATCC 23270)), this protein is CTP synthase.